Consider the following 444-residue polypeptide: Chitinase-like protein Idgf1 (444 aa).

Positions Met-1–Gly-20 are cleaved as a signal peptide. One can recognise a GH18 domain in the interval Lys-29–Leu-444. Cysteines 33 and 60 form a disulfide. N-linked (GlcNAc...) asparagine glycans are attached at residues Asn-213, Asn-225, and Asn-335. Cys-346 and Cys-429 are joined by a disulfide.

The protein belongs to the glycosyl hydrolase 18 family. IDGF subfamily. Glycosylated.

The protein localises to the secreted. Functionally, cooperates with insulin-like peptides to stimulate the proliferation, polarization and motility of imaginal disk cells. May act by stabilizing the binding of insulin-like peptides to its receptor through a simultaneous interaction with both molecules to form a multiprotein signaling complex. This is Chitinase-like protein Idgf1 (Idgf1) from Glossina morsitans morsitans (Savannah tsetse fly).